Consider the following 223-residue polypeptide: Phosphoribosylformylglycinamidine synthase subunit PurQ (223 aa).

Positions 3 to 223 constitute a Glutamine amidotransferase type-1 domain; the sequence is FAVLVFPGSN…MVKSWREQHV (221 aa). Cys-85 acts as the Nucleophile in catalysis. Catalysis depends on residues His-193 and Glu-195.

Part of the FGAM synthase complex composed of 1 PurL, 1 PurQ and 2 PurS subunits.

It is found in the cytoplasm. The catalysed reaction is N(2)-formyl-N(1)-(5-phospho-beta-D-ribosyl)glycinamide + L-glutamine + ATP + H2O = 2-formamido-N(1)-(5-O-phospho-beta-D-ribosyl)acetamidine + L-glutamate + ADP + phosphate + H(+). The enzyme catalyses L-glutamine + H2O = L-glutamate + NH4(+). The protein operates within purine metabolism; IMP biosynthesis via de novo pathway; 5-amino-1-(5-phospho-D-ribosyl)imidazole from N(2)-formyl-N(1)-(5-phospho-D-ribosyl)glycinamide: step 1/2. In terms of biological role, part of the phosphoribosylformylglycinamidine synthase complex involved in the purines biosynthetic pathway. Catalyzes the ATP-dependent conversion of formylglycinamide ribonucleotide (FGAR) and glutamine to yield formylglycinamidine ribonucleotide (FGAM) and glutamate. The FGAM synthase complex is composed of three subunits. PurQ produces an ammonia molecule by converting glutamine to glutamate. PurL transfers the ammonia molecule to FGAR to form FGAM in an ATP-dependent manner. PurS interacts with PurQ and PurL and is thought to assist in the transfer of the ammonia molecule from PurQ to PurL. This chain is Phosphoribosylformylglycinamidine synthase subunit PurQ, found in Staphylococcus aureus (strain Mu50 / ATCC 700699).